The chain runs to 75 residues: uncharacterized protein (75 aa).

A helical membrane pass occupies residues 7 to 26; that stretch reads ATAPLFVIVGLAVVLTGATG.

It localises to the membrane. This is an uncharacterized protein from Dictyostelium discoideum (Social amoeba).